The sequence spans 251 residues: tRNA (guanine-N(1)-)-methyltransferase (251 aa).

S-adenosyl-L-methionine-binding positions include Gly-113 and 133 to 138 (IGDYVL).

The protein belongs to the RNA methyltransferase TrmD family. In terms of assembly, homodimer.

The protein resides in the cytoplasm. It catalyses the reaction guanosine(37) in tRNA + S-adenosyl-L-methionine = N(1)-methylguanosine(37) in tRNA + S-adenosyl-L-homocysteine + H(+). Functionally, specifically methylates guanosine-37 in various tRNAs. The polypeptide is tRNA (guanine-N(1)-)-methyltransferase (Methylococcus capsulatus (strain ATCC 33009 / NCIMB 11132 / Bath)).